A 96-amino-acid chain; its full sequence is Beta-defensin 20 (96 aa).

The signal sequence occupies residues 1–21 (MKLLQVLLVLLFVALADGAQP). Cystine bridges form between Cys24–Cys52, Cys32–Cys46, and Cys36–Cys53.

Belongs to the beta-defensin family.

The protein resides in the secreted. Its function is as follows. Has antibacterial activity. The polypeptide is Beta-defensin 20 (Defb20) (Mus musculus (Mouse)).